Here is a 308-residue protein sequence, read N- to C-terminus: rRNA 2'-O-methyltransferase fibrillarin 1 (308 aa).

Positions 1–68 are disordered; sequence MRPPVTGGRG…PRGGMKGGSK (68 aa). Positions 22–35 are enriched in gly residues; that stretch reads GRGFGGGRSFGGGR. Over residues 42–52 the composition is skewed to basic residues; that stretch reads SGPRGRGRGAP. Residues 53–65 are compositionally biased toward gly residues; that stretch reads RGRGGPPRGGMKG. Residues 156 to 157, 175 to 176, 200 to 201, and 220 to 223 contribute to the S-adenosyl-L-methionine site; these read TT, EF, DA, and DVAQ.

It belongs to the methyltransferase superfamily. Fibrillarin family. As to quaternary structure, component of box C/D small nucleolar ribonucleoprotein (snoRNP) particles. Interacts with SKP1A. As to expression, expressed in roots, leaves and flowers. Expressed in stems.

It localises to the nucleus. The protein resides in the nucleolus. It catalyses the reaction a ribonucleotide in rRNA + S-adenosyl-L-methionine = a 2'-O-methylribonucleotide in rRNA + S-adenosyl-L-homocysteine + H(+). It carries out the reaction L-glutaminyl-[histone H2A] + S-adenosyl-L-methionine = N(5)-methyl-L-glutaminyl-[histone H2A] + S-adenosyl-L-homocysteine + H(+). S-adenosyl-L-methionine-dependent methyltransferase that has the ability to methylate both RNAs and proteins. Involved in pre-rRNA processing. Utilizes the methyl donor S-adenosyl-L-methionine to catalyze the site-specific 2'-hydroxyl methylation of ribose moieties in pre-ribosomal RNA. Site specificity is provided by a guide RNA that base pairs with the substrate. Methylation occurs at a characteristic distance from the sequence involved in base pairing with the guide RNA. Also acts as a protein methyltransferase by mediating methylation of 'Gln-105' of histone H2A (H2AQ105me), a modification that impairs binding of the FACT complex and is specifically present at 35S ribosomal DNA locus. Binds monophosphate phosphoinositides in vitro. The sequence is that of rRNA 2'-O-methyltransferase fibrillarin 1 from Arabidopsis thaliana (Mouse-ear cress).